A 489-amino-acid polypeptide reads, in one-letter code: Major aspartyl peptidase 1 (489 aa).

The N-terminal stretch at 1–16 (MHYLAVALPLLTLALA) is a signal peptide. Residues 101–432 (YAGQVSIGTP…RYNPAAIGFA (332 aa)) enclose the Peptidase A1 domain. Asp-119 is an active-site residue. Gly-121 contributes to the pepstatin A binding site. Cys-132 and Cys-137 are oxidised to a cystine. Pepstatin A contacts are provided by Thr-161, Gly-163, and Ser-164. Asn-266 carries N-linked (GlcNAc...) asparagine glycosylation. Residue Tyr-286 coordinates pepstatin A. The active site involves Asp-317. Pepstatin A contacts are provided by Thr-320 and Thr-321. Cys-357 and Cys-391 form a disulfide bridge. Positions 442–466 (AGNPSSSTTGGGTSGSNGGGSSSGA) are disordered. Positions 450–463 (TGGGTSGSNGGGSS) are enriched in gly residues. Positions 456–489 (GSNGGGSSSGAMERKGVQLGWLVGAVAVGVAAMI) are cleaved as a propeptide — removed at pH 5.0; by autocatalysis.

This sequence belongs to the peptidase A1 family. In terms of assembly, monomer. Post-translationally, activated by the autocatalytic cleavage of the propeptide. Cleaved at the end of the propeptide promiscuously from residue 76 to residue 79. C-terminal cleavage by autocatalysis at Gly-456 at the pH optimum indicating a possible regulatory or other function of this propeptide.

It localises to the secreted. Its activity is regulated as follows. Activated by low pH. Inhibited by pepstatin A with an IC(50) of 1.4 nM. Inhibited by acetyl pepstatin. Inhibited by HIV antiretroviral therapy protease inhibitors including amprenavir and ritonavir. Inhibited by HIV-1 protease inhibitor brecanavir with an approximate IC(50) of 352 nM. Inhibited by HIV-1 protease inhibitors CGP53437 and GS-8374. From the tested peptidomimetic inhibitor molecules, macrocycles containing P2-P3' tethered side chains, statines in P1 and an alpha amino acid in P2' are the best. From the linear peptidomimetic inhibitors, the ones with a phenylstatine or hydroxyethylamine scissile bond isoster are better than compounds with a reduced bond or a homo-amide. Overall, inhibitors with a phenylalanine side chain, either unsubstituted or with a small substituent, is preferred in P1 while a bulkier P1 side chain leads to lower inhibition. Functionally, possesses prevalent extracellular endopeptidase activity at low pH condition. Required for high-density growth in acidic environments. Broad substrate specificity with preference cleavage of the peptide substrate between hydrophobic amino acids. Cleaves substrate at P1-P1' between Phe-Leu. Positively charged amino acids are preferred at P2. Prefers hydrophobic amino acids at the P3 and P4 positions. Cleaves substrate also at P1'-P2' between Leu-Val to some degree. Required for virulence in mouse inhalation model of infection. This is Major aspartyl peptidase 1 from Cryptococcus neoformans var. grubii serotype A (strain H99 / ATCC 208821 / CBS 10515 / FGSC 9487) (Filobasidiella neoformans var. grubii).